We begin with the raw amino-acid sequence, 347 residues long: D-alanine--D-alanine ligase (347 aa).

The 210-residue stretch at 133 to 342 folds into the ATP-grasp domain; sequence KQAFAQASLP…FPDLVHRLIQ (210 aa). An ATP-binding site is contributed by 169-224; the sequence is ETELGYPCFVKPANLGSSVGIAKVRDRAELEAALDQAAALDRRLIIEAAIDNPREV. Mg(2+) is bound by residues aspartate 296, glutamate 309, and asparagine 311.

This sequence belongs to the D-alanine--D-alanine ligase family. It depends on Mg(2+) as a cofactor. Mn(2+) serves as cofactor.

The protein localises to the cytoplasm. The catalysed reaction is 2 D-alanine + ATP = D-alanyl-D-alanine + ADP + phosphate + H(+). Its pathway is cell wall biogenesis; peptidoglycan biosynthesis. Cell wall formation. This Synechococcus elongatus (strain ATCC 33912 / PCC 7942 / FACHB-805) (Anacystis nidulans R2) protein is D-alanine--D-alanine ligase.